The chain runs to 186 residues: NADH-quinone oxidoreductase subunit B 2 (186 aa).

The disordered stretch occupies residues 1–27 (MPSFTQPHSAPRNFQFPGQQRQGDPTM). [4Fe-4S] cluster-binding residues include Cys65, Cys66, Cys130, and Cys160.

This sequence belongs to the complex I 20 kDa subunit family. In terms of assembly, NDH-1 is composed of 14 different subunits. Subunits NuoB, C, D, E, F, and G constitute the peripheral sector of the complex. Requires [4Fe-4S] cluster as cofactor.

Its subcellular location is the cell inner membrane. It catalyses the reaction a quinone + NADH + 5 H(+)(in) = a quinol + NAD(+) + 4 H(+)(out). In terms of biological role, NDH-1 shuttles electrons from NADH, via FMN and iron-sulfur (Fe-S) centers, to quinones in the respiratory chain. The immediate electron acceptor for the enzyme in this species is believed to be ubiquinone. Couples the redox reaction to proton translocation (for every two electrons transferred, four hydrogen ions are translocated across the cytoplasmic membrane), and thus conserves the redox energy in a proton gradient. The polypeptide is NADH-quinone oxidoreductase subunit B 2 (Rhizobium etli (strain ATCC 51251 / DSM 11541 / JCM 21823 / NBRC 15573 / CFN 42)).